The primary structure comprises 533 residues: Large neutral amino acids transporter small subunit 2 (533 aa).

The segment at 1–33 is disordered; sequence MEKGTRQRNNTAKNHPDRGSDTSPEAEASSGGG. The Cytoplasmic portion of the chain corresponds to 1–45; it reads MEKGTRQRNNTAKNHPDRGSDTSPEAEASSGGGGVALKKEIGLVS. A phosphoserine mark is found at Ser-20, Ser-23, Ser-29, and Ser-30. A helical transmembrane segment spans residues 46–66; that stretch reads ACGIIVGNIIGSGIFVSPKGV. Ile-54 is a binding site for L-leucine. At 67-74 the chain is on the extracellular side; it reads LENAGSVG. The helical transmembrane segment at 75–96 threads the bilayer; sequence LALIVWIVTGVITAVGALCYAE. Topologically, residues 97–117 are cytoplasmic; sequence LGVTIPKSGGDYSYVKDIFGG. The helical transmembrane segment at 118-150 threads the bilayer; it reads LAGFLRLWIAVLVIYPTNQAVIALTFSNYVLQP. Asn-135 contributes to the L-tryptophan binding site. At 151–158 the chain is on the extracellular side; the sequence is LFPTCFPP. The chain crosses the membrane as a helical span at residues 159–179; that stretch reads ESGLRLLAAICLLLLTWVNCS. Residues 180 to 182 lie on the Cytoplasmic side of the membrane; that stretch reads SVR. A helical transmembrane segment spans residues 183–211; it reads WATRVQDIFTAGKLLALALIIIMGVVQIC. Topologically, residues 212–231 are extracellular; that stretch reads KGEFFWLEPKNAFENFQEPD. Residues 232–253 form a helical membrane-spanning segment; sequence IGLVALAFLQGSFAYGGWNFLN. An L-leucine-binding site is contributed by Gly-247. The Cytoplasmic segment spans residues 254–266; sequence YVTEELVDPYKNL. A helical transmembrane segment spans residues 267–288; sequence PRAIFISIPLVTFVYVFANIAY. Residues 289–313 are Extracellular-facing; the sequence is VTAMSPQELLASNAVAVTFGEKLLG. A helical transmembrane segment spans residues 314-339; that stretch reads VMAWIMPISVALSTFGGVNGSLFTSS. Topologically, residues 340–365 are cytoplasmic; the sequence is RLFFAGAREGHLPSVLAMIHVKRCTP. The chain crosses the membrane as a helical span at residues 366 to 383; the sequence is IPALLFTCLSTLLMLVTS. Residues 384–387 lie on the Extracellular side of the membrane; the sequence is DMYT. A helical membrane pass occupies residues 388–409; it reads LINYVGFINYLFYGVTVAGQIV. Asn-396 contacts L-tryptophan. The Cytoplasmic portion of the chain corresponds to 410 to 424; sequence LRWKKPDIPRPIKIS. 2 consecutive transmembrane segments (helical) span residues 425-447 and 448-467; these read LLFP…WSEP and VVCG…YFLG. At 468–533 the chain is on the cytoplasmic side; the sequence is VYWQHKPKCF…VKDPDSEEQP (66 aa). The tract at residues 500–533 is disordered; the sequence is GDSGTEETIDDVEEQHKPIFQPTPVKDPDSEEQP. Positions 502-512 are enriched in acidic residues; that stretch reads SGTEETIDDVE. Ser-529 is modified (phosphoserine).

It belongs to the amino acid-polyamine-organocation (APC) superfamily. L-type amino acid transporter (LAT) (TC 2.A.3.8) family. As to quaternary structure, disulfide-linked heterodimer composed of the catalytic light chain subunit SLC7A8 and the heavy chain subunit SLC3A2. SLC3A2 acts as a chaperone for correct plasma membrane trafficking and stabilization of SLC7A8 and modulates the substrate affinity and specificity of SLC7A8. ICAM-1 associates with the heterodimer SLC3A2/SLC7A8; facilitates leucine uptake. Expression is seen in jejunum mucosa and the epithelial cells of the jejunum, ileum and colon, as well as in kidney, placenta, brain, testis and skeletal muscle. Expressed in retina, inner blood-retinal barrier of retina, retinal vascular endothelial cells. Also expressed in the intestinal epithelial cell line IEC-6 and in the retinal capillary endothelial cell line TR-iBRB2.

The protein resides in the cell membrane. Its subcellular location is the basolateral cell membrane. The catalysed reaction is L-dopa(out) + L-phenylalanine(in) = L-dopa(in) + L-phenylalanine(out). It catalyses the reaction 3,3'-diiodo-L-thyronine(out) = 3,3'-diiodo-L-thyronine(in). The enzyme catalyses L-histidine(in) + L-phenylalanine(out) = L-histidine(out) + L-phenylalanine(in). It carries out the reaction L-tryptophan(in) + L-phenylalanine(out) = L-tryptophan(out) + L-phenylalanine(in). The catalysed reaction is L-isoleucine(in) + L-phenylalanine(out) = L-isoleucine(out) + L-phenylalanine(in). It catalyses the reaction L-valine(in) + L-phenylalanine(out) = L-valine(out) + L-phenylalanine(in). The enzyme catalyses L-leucine(in) + L-phenylalanine(out) = L-leucine(out) + L-phenylalanine(in). It carries out the reaction L-glutamine(in) + L-phenylalanine(out) = L-glutamine(out) + L-phenylalanine(in). The catalysed reaction is L-cysteine(in) + L-phenylalanine(out) = L-cysteine(out) + L-phenylalanine(in). It catalyses the reaction L-phenylalanine(out) + L-methionine(in) = L-phenylalanine(in) + L-methionine(out). The enzyme catalyses L-leucine(out) + L-methionine(in) = L-leucine(in) + L-methionine(out). It carries out the reaction L-cysteine(out) + L-methionine(in) = L-cysteine(in) + L-methionine(out). The catalysed reaction is S-methylmercury-L-cysteine(out) + L-methionine(in) = S-methylmercury-L-cysteine(in) + L-methionine(out). It catalyses the reaction S-methylmercury-L-cysteine(in) + L-leucine(out) = S-methylmercury-L-cysteine(out) + L-leucine(in). The enzyme catalyses S-methylmercury-L-cysteine(in) + L-phenylalanine(out) = S-methylmercury-L-cysteine(out) + L-phenylalanine(in). It carries out the reaction L-phenylalanine(out) + L-serine(in) = L-phenylalanine(in) + L-serine(out). The catalysed reaction is L-phenylalanine(out) + glycine(in) = L-phenylalanine(in) + glycine(out). It catalyses the reaction L-phenylalanine(out) + L-alanine(in) = L-phenylalanine(in) + L-alanine(out). The enzyme catalyses 3,3',5-triiodo-L-thyronine(out) = 3,3',5-triiodo-L-thyronine(in). With respect to regulation, leucine transport activity is inhibited by 2-amino-bicyclo-(2,2,1)-heptane-2-carboxylate (BCH), glycine, L-isomers of the neutral amino acids and histidine. Associates with SLC3A2 to form a functional heterodimeric complex that translocates small and large neutral amino acids with broad specificity and a stoichiometry of 1:1. Functions as amino acid antiporter mediating the influx of extracellular essential amino acids mainly in exchange with the efflux of highly concentrated intracellular amino acids. Has relatively symmetrical selectivities but strongly asymmetrical substrate affinities at both the intracellular and extracellular sides of the transporter. This asymmetry allows SLC7A8 to regulate intracellular amino acid pools (mM concentrations) by exchange with external amino acids (uM concentration range), equilibrating the relative concentrations of different amino acids across the plasma membrane instead of mediating their net uptake. May play an essential role in the reabsorption of neutral amino acids from the epithelial cells to the bloodstream in the kidney. Involved in the uptake of methylmercury (MeHg) when administered as the L-cysteine or D,L-homocysteine complexes, and hence plays a role in metal ion homeostasis and toxicity. Involved in the cellular activity of small molecular weight nitrosothiols, via the stereoselective transport of L-nitrosocysteine (L-CNSO) across the transmembrane. Imports the thyroid hormone diiodothyronine (T2) and to a smaller extent triiodothyronine (T3) but not rT 3 or thyroxine (T4). Mediates the uptake of L-DOPA. May participate in auditory function. This is Large neutral amino acids transporter small subunit 2 (Slc7a8) from Rattus norvegicus (Rat).